The following is a 196-amino-acid chain: Dehydrogenase RED3 (196 aa).

Residues S47, D74, N101, R134, Y166, and K170 each contribute to the NADP(+) site. The active-site Proton acceptor is the Y166. The active-site Lowers pKa of active site Tyr is K170.

This sequence belongs to the short-chain dehydrogenases/reductases (SDR) family.

It catalyses the reaction a primary alcohol + NAD(+) = an aldehyde + NADH + H(+). The enzyme catalyses a secondary alcohol + NAD(+) = a ketone + NADH + H(+). It participates in mycotoxin biosynthesis. Its function is as follows. Dehydrogenase; part of the Tox1B locus, one of the 2 loci that mediate the biosynthesis of T-toxin, a family of linear polyketides 37 to 45 carbons in length, of which the major component is 41 carbons, and which leads to high virulence to maize. One of the PKSs (PKS1 or PKS2) could synthesize a precursor, used subsequently by the other PKS as starter unit, to add additional carbons. Variability in the length of the final carbon backbone C35-47 could be achieved by varying the number of condensation cycles, or use of different starter or extender units or might be due to decarboxylation of the penultimate product, catalyzed by DEC1. Additional proteins are required for the biosynthesis of T-toxin, including oxidoreductases RED1, RED2, RED3, LAM1 and OXI1, as well as esterase TOX9. The sequence is that of Dehydrogenase RED3 from Cochliobolus heterostrophus (strain C4 / ATCC 48331 / race T) (Southern corn leaf blight fungus).